Here is a 364-residue protein sequence, read N- to C-terminus: Fructose-bisphosphate aldolase A (364 aa).

A Phosphotyrosine modification is found at Tyr5. At Thr9 the chain carries Phosphothreonine. Phosphoserine is present on residues Ser36 and Ser39. Lys42 carries the N6-acetyllysine; alternate modification. Lys42 participates in a covalent cross-link: Glycyl lysine isopeptide (Lys-Gly) (interchain with G-Cter in SUMO1); alternate. Lys42 is covalently cross-linked (Glycyl lysine isopeptide (Lys-Gly) (interchain with G-Cter in SUMO2); alternate). Arg43 contacts beta-D-fructose 1,6-bisphosphate. Ser46 bears the Phosphoserine mark. Lys99 is modified (N6-(2-hydroxyisobutyryl)lysine). At Lys108 the chain carries N6-acetyllysine. Lys111 bears the N6-acetyllysine; alternate mark. Position 111 is an N6-malonyllysine; alternate (Lys111). Ser132 bears the Phosphoserine mark. Lys147 is modified (N6-(2-hydroxyisobutyryl)lysine). The active-site Proton acceptor is Glu188. Catalysis depends on Lys230, which acts as the Schiff-base intermediate with dihydroxyacetone-P. A Phosphoserine modification is found at Ser272. Beta-D-fructose 1,6-bisphosphate contacts are provided by residues 272 to 274 (SGG), Ser301, and Arg304. Lys312 carries the N6-malonyllysine modification. Lys330 is subject to N6-acetyllysine.

It belongs to the class I fructose-bisphosphate aldolase family. In terms of assembly, homotetramer. Interacts with SNX9 and WAS. Interacts with FBP2; the interaction blocks FBP2 inhibition by physiological concentrations of AMP and reduces inhibition by Ca(2+).

The protein resides in the cytoplasm. Its subcellular location is the myofibril. It is found in the sarcomere. It localises to the i band. The protein localises to the m line. It catalyses the reaction beta-D-fructose 1,6-bisphosphate = D-glyceraldehyde 3-phosphate + dihydroxyacetone phosphate. It participates in carbohydrate degradation; glycolysis; D-glyceraldehyde 3-phosphate and glycerone phosphate from D-glucose: step 4/4. Functionally, catalyzes the reversible conversion of beta-D-fructose 1,6-bisphosphate (FBP) into two triose phosphate and plays a key role in glycolysis and gluconeogenesis. In addition, may also function as scaffolding protein. The sequence is that of Fructose-bisphosphate aldolase A (ALDOA) from Pongo abelii (Sumatran orangutan).